Consider the following 367-residue polypeptide: tRNA-specific 2-thiouridylase MnmA 2 (367 aa).

Residues 10–17 and M36 each bind ATP; that span reads GMSGGVDS. An interaction with target base in tRNA region spans residues 96 to 98; sequence NPD. The active-site Nucleophile is the C101. A disulfide bridge connects residues C101 and C197. G125 is an ATP binding site. The interval 147-149 is interaction with tRNA; sequence KDQ. C197 serves as the catalytic Cysteine persulfide intermediate. The tract at residues 314–315 is interaction with tRNA; that stretch reads RY.

The protein belongs to the MnmA/TRMU family.

The protein localises to the cytoplasm. It catalyses the reaction S-sulfanyl-L-cysteinyl-[protein] + uridine(34) in tRNA + AH2 + ATP = 2-thiouridine(34) in tRNA + L-cysteinyl-[protein] + A + AMP + diphosphate + H(+). Catalyzes the 2-thiolation of uridine at the wobble position (U34) of tRNA, leading to the formation of s(2)U34. In Aliarcobacter butzleri (strain RM4018) (Arcobacter butzleri), this protein is tRNA-specific 2-thiouridylase MnmA 2.